The chain runs to 447 residues: Phosphoglucosamine mutase (447 aa).

The Phosphoserine intermediate role is filled by S102. S102, D241, D243, and D245 together coordinate Mg(2+). At S102 the chain carries Phosphoserine.

This sequence belongs to the phosphohexose mutase family. Requires Mg(2+) as cofactor. In terms of processing, activated by phosphorylation.

The enzyme catalyses alpha-D-glucosamine 1-phosphate = D-glucosamine 6-phosphate. Catalyzes the conversion of glucosamine-6-phosphate to glucosamine-1-phosphate. This Pseudomonas savastanoi pv. phaseolicola (strain 1448A / Race 6) (Pseudomonas syringae pv. phaseolicola (strain 1448A / Race 6)) protein is Phosphoglucosamine mutase.